Consider the following 727-residue polypeptide: NADH-ubiquinone oxidoreductase 75 kDa subunit, mitochondrial (727 aa).

The transit peptide at 1–23 directs the protein to the mitochondrion; that stretch reads MLRIPVRKALVVLSKSPKGCVRT. One can recognise a 2Fe-2S ferredoxin-type domain in the interval 30–108; it reads NLIEVFVDGQ…GWNILTNSKK (79 aa). The [2Fe-2S] cluster site is built by Cys-64, Cys-75, and Cys-78. Lys-84 bears the N6-acetyllysine mark. [2Fe-2S] cluster is bound at residue Cys-92. The region spanning 108–147 is the 4Fe-4S His(Cys)3-ligated-type domain; sequence KSKKAREGVMEFLLANHPLDCPICDQGGECDLQDQSMMFG. Residues His-124, Cys-128, Cys-131, Cys-137, Cys-176, Cys-179, Cys-182, and Cys-226 each contribute to the [4Fe-4S] cluster site. The 57-residue stretch at 245 to 301 folds into the 4Fe-4S Mo/W bis-MGD-type domain; it reads TRKTESIDVMDAVGSNIVVSTRTGEVMRILPRMHEDINEEWISDKTRFAYDGLKRQR. N6-acetyllysine occurs at positions 467, 499, and 709.

This sequence belongs to the complex I 75 kDa subunit family. In terms of assembly, core subunit of respiratory chain NADH dehydrogenase (Complex I) which is composed of 45 different subunits. This is the largest subunit of complex I and it is a component of the iron-sulfur (IP) fragment of the enzyme. Complex I associates with ubiquinol-cytochrome reductase complex (Complex III) to form supercomplexes. Interacts with MDM2 and AKAP1. Requires [2Fe-2S] cluster as cofactor. It depends on [4Fe-4S] cluster as a cofactor.

The protein localises to the mitochondrion inner membrane. It carries out the reaction a ubiquinone + NADH + 5 H(+)(in) = a ubiquinol + NAD(+) + 4 H(+)(out). Core subunit of the mitochondrial membrane respiratory chain NADH dehydrogenase (Complex I) which catalyzes electron transfer from NADH through the respiratory chain, using ubiquinone as an electron acceptor. Essential for catalysing the entry and efficient transfer of electrons within complex I. Plays a key role in the assembly and stability of complex I and participates in the association of complex I with ubiquinol-cytochrome reductase complex (Complex III) to form supercomplexes. The protein is NADH-ubiquinone oxidoreductase 75 kDa subunit, mitochondrial (NDUFS1) of Pan troglodytes (Chimpanzee).